The sequence spans 134 residues: Ribosome-binding factor A (134 aa).

It belongs to the RbfA family. In terms of assembly, monomer. Binds 30S ribosomal subunits, but not 50S ribosomal subunits or 70S ribosomes.

The protein resides in the cytoplasm. In terms of biological role, one of several proteins that assist in the late maturation steps of the functional core of the 30S ribosomal subunit. Associates with free 30S ribosomal subunits (but not with 30S subunits that are part of 70S ribosomes or polysomes). Required for efficient processing of 16S rRNA. May interact with the 5'-terminal helix region of 16S rRNA. This is Ribosome-binding factor A from Tolumonas auensis (strain DSM 9187 / NBRC 110442 / TA 4).